The chain runs to 295 residues: Trehalose/maltose transport system permease protein MalF (295 aa).

The next 7 helical transmembrane spans lie at 16-36, 79-99, 112-132, 146-166, 210-230, 236-256, and 267-287; these read LGYLMILPLLTVVLVFIILPV, VSFSFVSVSLETILGLSFALI, AIVLIPWAVPTIISARTWELM, ILGVSPVNWLGTPISAFFAIV, ITLPLLKPVLIVALILRTIDA, IIYVLTGGGPGGATTSISLLA, and IGSAISILTFVLVLSFTIVYL. In terms of domain architecture, ABC transmembrane type-1 spans 75 to 286; it reads TFVTVSFSFV…VLVLSFTIVY (212 aa).

The protein belongs to the binding-protein-dependent transport system permease family. As to quaternary structure, the complex is composed of two ATP-binding proteins (MalK), two transmembrane proteins (MalG and MalF) and a solute-binding protein (MalE).

Its subcellular location is the cell membrane. In terms of biological role, part of the ABC transporter complex MalEFGK involved in trehalose/maltose import. Responsible for the translocation of the substrate across the membrane. This chain is Trehalose/maltose transport system permease protein MalF (malF), found in Thermococcus litoralis (strain ATCC 51850 / DSM 5473 / JCM 8560 / NS-C).